The chain runs to 133 residues: MSEFTCVEAKSRFRAIRWTVEHLGLPKGFEGHFVGYSLYVDEVMDMSGCREEYILDSTGKHVAYFAWCVSCDIHHKGDILDVTSVVINPEADSKGLQRFLAKRFKYLAELHDCDWVSRCKHEGETMRVYFKEV.

The sequence is that of Protein 7 from Escherichia phage T7 (Bacteriophage T7).